Reading from the N-terminus, the 202-residue chain is NAD(P)H-quinone oxidoreductase chain 6 (202 aa).

Transmembrane regions (helical) follow at residues 9–29, 32–52, 61–81, 98–118, and 144–164; these read VVSF…VVLA, IVYS…MYLL, AQVL…IMLV, VLTA…VLAT, and FLLP…GAII.

The protein belongs to the complex I subunit 6 family.

Its subcellular location is the membrane. It carries out the reaction a plastoquinone + NADH + (n+1) H(+)(in) = a plastoquinol + NAD(+) + n H(+)(out). The enzyme catalyses a plastoquinone + NADPH + (n+1) H(+)(in) = a plastoquinol + NADP(+) + n H(+)(out). NDH-1 shuttles electrons from NAD(P)H, via FMN and iron-sulfur (Fe-S) centers, to quinones in the respiratory chain. The immediate electron acceptor for the enzyme in this species is believed to be plastoquinone. Couples the redox reaction to proton translocation (for every two electrons transferred, four hydrogen ions are translocated across the cytoplasmic membrane), and thus conserves the redox energy in a proton gradient. The chain is NAD(P)H-quinone oxidoreductase chain 6 (ndhG) from Nostoc sp. (strain PCC 7120 / SAG 25.82 / UTEX 2576).